Here is a 236-residue protein sequence, read N- to C-terminus: Class B acid phosphatase (236 aa).

The signal sequence occupies residues 1–23 (MRKLTLTLSALALALSLNSVADA). Asp-68 serves as the catalytic Nucleophile. Asp-68 and Asp-70 together coordinate Mg(2+). The Proton donor role is filled by Asp-70. Residues 136–137 (TG) and Lys-176 each bind substrate. Asp-191 provides a ligand contact to Mg(2+).

Belongs to the class B bacterial acid phosphatase family. As to quaternary structure, homotetramer. Requires Mg(2+) as cofactor.

Its subcellular location is the periplasm. The enzyme catalyses a phosphate monoester + H2O = an alcohol + phosphate. With respect to regulation, activated by ethanol. Also activated by Co(2+), Zn(2+) and glycerol. Inhibited by EDTA, inorganic phosphate, nucleosides and Ca(2+). Unaffected by fluoride and tartrate. Dephosphorylates several organic phosphate monoesters including 5'-AMP, 3'-AMP, pNPP, PDP, 5'-UMP, 3'-UMP, G2P, glucose 6-P and ribose 5-P. No activity toward organic phosphate diesters. Also has a phosphotransferase activity catalyzing the transfer of low-energy phosphate groups from organic phosphate monoesters to free hydroxyl groups of various organic compounds. The polypeptide is Class B acid phosphatase (aphA) (Morganella morganii (Proteus morganii)).